We begin with the raw amino-acid sequence, 262 residues long: Encapsulin nanocompartment protein Rv1762c (262 aa).

It belongs to the UPF0145 family.

The protein localises to the encapsulin nanocompartment. Functionally, cargo protein of a type 1 encapsulin nanocompartment possibly involved in protection against oxidative stress. The chain is Encapsulin nanocompartment protein Rv1762c from Mycobacterium tuberculosis (strain ATCC 25618 / H37Rv).